The following is a 253-amino-acid chain: Small ribosomal subunit protein eS6 (253 aa).

Residues 200–253 (KKRLAKRKQSENDYAKLLAQRKKESKVRRQEELKRRRSASMRDSKSSDKSAPQK) are disordered. Residues 226-247 (VRRQEELKRRRSASMRDSKSSD) are compositionally biased toward basic and acidic residues.

This sequence belongs to the eukaryotic ribosomal protein eS6 family. As to quaternary structure, component of the small ribosomal subunit. Part of the small subunit (SSU) processome, composed of more than 70 proteins and the RNA chaperone small nucleolar RNA (snoRNA) U3. In terms of processing, ribosomal protein S6 is the major substrate of protein kinases in eukaryote ribosomes.

It is found in the cytoplasm. The protein localises to the nucleus. The protein resides in the nucleolus. Functionally, component of the 40S small ribosomal subunit. Plays an important role in controlling cell growth and proliferation through the selective translation of particular classes of mRNA. Part of the small subunit (SSU) processome, first precursor of the small eukaryotic ribosomal subunit. During the assembly of the SSU processome in the nucleolus, many ribosome biogenesis factors, an RNA chaperone and ribosomal proteins associate with the nascent pre-rRNA and work in concert to generate RNA folding, modifications, rearrangements and cleavage as well as targeted degradation of pre-ribosomal RNA by the RNA exosome. This is Small ribosomal subunit protein eS6 (RpS6) from Spodoptera frugiperda (Fall armyworm).